We begin with the raw amino-acid sequence, 390 residues long: Chalcone synthase (390 aa).

The active site involves cysteine 164.

It belongs to the thiolase-like superfamily. Chalcone/stilbene synthases family.

The catalysed reaction is (E)-4-coumaroyl-CoA + 3 malonyl-CoA + 3 H(+) = 2',4,4',6'-tetrahydroxychalcone + 3 CO2 + 4 CoA. Its pathway is secondary metabolite biosynthesis; flavonoid biosynthesis. In terms of biological role, the primary product of this enzyme is 4,2',4',6'-tetrahydroxychalcone (also termed naringenin-chalcone or chalcone) which can under specific conditions spontaneously isomerize into naringenin. The sequence is that of Chalcone synthase (CHS) from Antirrhinum majus (Garden snapdragon).